The following is a 230-amino-acid chain: Ethylene-responsive transcription factor ERF012 (230 aa).

A compositionally biased stretch (basic and acidic residues) spans 1-17 (MVKQERKIQTSSTKKEM). Residues 1–51 (MVKQERKIQTSSTKKEMPLSSSPSSSSSSSSSSSSSSCKNKNKKSKIKKYK) form a disordered region. Residues 20–39 (SSSPSSSSSSSSSSSSSSCK) are compositionally biased toward low complexity. The segment covering 40-51 (NKNKKSKIKKYK) has biased composition (basic residues). Positions 49 to 106 (KYKGVRMRSWGSWVSEIRAPNQKTRIWLGSYSTAEAAARAYDVALLCLKGPQANLNFP) form a DNA-binding region, AP2/ERF.

It belongs to the AP2/ERF transcription factor family. ERF subfamily. As to expression, expressed cotyledons, ovules and seeds of immature siliques.

The protein localises to the nucleus. In terms of biological role, transcriptional activator involved in the regulation of plant development and tolerance to abiotic stresses. Involved in salt and osmotic stress response pathways. May be regulated by the stress-related genes RD29A, RD22, DREB1A or P5CS during stress response. Binds to the GCC-box pathogenesis-related promoter element. May be involved in the regulation of gene expression by stress factors and by components of stress signal transduction pathways. The sequence is that of Ethylene-responsive transcription factor ERF012 (ERF012) from Arabidopsis thaliana (Mouse-ear cress).